The sequence spans 466 residues: Cysteine--tRNA ligase (466 aa).

Cysteine 29 provides a ligand contact to Zn(2+). Positions 31 to 41 (PTVYNYIHIGN) match the 'HIGH' region motif. Positions 209, 234, and 238 each coordinate Zn(2+). A 'KMSKS' region motif is present at residues 266–270 (KMSKS). Lysine 269 is a binding site for ATP.

Belongs to the class-I aminoacyl-tRNA synthetase family. As to quaternary structure, monomer. Zn(2+) is required as a cofactor.

Its subcellular location is the cytoplasm. The catalysed reaction is tRNA(Cys) + L-cysteine + ATP = L-cysteinyl-tRNA(Cys) + AMP + diphosphate. This chain is Cysteine--tRNA ligase, found in Lysinibacillus sphaericus (strain C3-41).